The chain runs to 161 residues: Regulatory protein RecX (161 aa).

This sequence belongs to the RecX family.

Its subcellular location is the cytoplasm. In terms of biological role, modulates RecA activity. The polypeptide is Regulatory protein RecX (Halorhodospira halophila (strain DSM 244 / SL1) (Ectothiorhodospira halophila (strain DSM 244 / SL1))).